We begin with the raw amino-acid sequence, 321 residues long: Lipoyl synthase (321 aa).

Residues Cys-68, Cys-73, Cys-79, Cys-94, Cys-98, Cys-101, and Ser-308 each coordinate [4Fe-4S] cluster. Positions 80–297 (FNHGTATFMI…KEEAMAMGFT (218 aa)) constitute a Radical SAM core domain.

This sequence belongs to the radical SAM superfamily. Lipoyl synthase family. [4Fe-4S] cluster is required as a cofactor.

It localises to the cytoplasm. It catalyses the reaction [[Fe-S] cluster scaffold protein carrying a second [4Fe-4S](2+) cluster] + N(6)-octanoyl-L-lysyl-[protein] + 2 oxidized [2Fe-2S]-[ferredoxin] + 2 S-adenosyl-L-methionine + 4 H(+) = [[Fe-S] cluster scaffold protein] + N(6)-[(R)-dihydrolipoyl]-L-lysyl-[protein] + 4 Fe(3+) + 2 hydrogen sulfide + 2 5'-deoxyadenosine + 2 L-methionine + 2 reduced [2Fe-2S]-[ferredoxin]. It participates in protein modification; protein lipoylation via endogenous pathway; protein N(6)-(lipoyl)lysine from octanoyl-[acyl-carrier-protein]: step 2/2. Its function is as follows. Catalyzes the radical-mediated insertion of two sulfur atoms into the C-6 and C-8 positions of the octanoyl moiety bound to the lipoyl domains of lipoate-dependent enzymes, thereby converting the octanoylated domains into lipoylated derivatives. This chain is Lipoyl synthase, found in Serratia proteamaculans (strain 568).